The primary structure comprises 625 residues: Replication protein E1 (625 aa).

The Nuclear localization signal signature appears at 83 to 85 (KRK). A phosphoserine; by host mark is found at serine 89, serine 93, and serine 107. Residues 106-115 (LSPRLNEISL) carry the Nuclear export signal motif. The tract at residues 147-169 (GGGGQDVQAGGKENTRPDDGGGD) is disordered. Positions 162–328 (RPDDGGGDAT…QTMFQHGLED (167 aa)) are DNA-binding region. One can recognise an SF3 helicase domain in the interval 427 to 577 (VEFIAFLAAL…FPFDQNGNPV (151 aa)). 453-460 (GPPNTGKS) lines the ATP pocket. Lysine 534 participates in a covalent cross-link: Glycyl lysine isopeptide (Lys-Gly) (interchain with G-Cter in SUMO).

The protein belongs to the papillomaviridae E1 protein family. As to quaternary structure, can form hexamers. Interacts with E2 protein; this interaction increases E1 DNA binding specificity. Interacts with host DNA polymerase subunit POLA2. Interacts with host single stranded DNA-binding protein RPA1. Interacts with host TOP1; this interaction stimulates the enzymatic activity of TOP1. In terms of processing, phosphorylated. Post-translationally, sumoylated.

The protein resides in the host nucleus. The enzyme catalyses Couples ATP hydrolysis with the unwinding of duplex DNA by translocating in the 3'-5' direction.. The catalysed reaction is ATP + H2O = ADP + phosphate + H(+). Functionally, ATP-dependent DNA 3'-5' helicase required for initiation of viral DNA replication. It forms a complex with the viral E2 protein. The E1-E2 complex binds to the replication origin which contains binding sites for both proteins. During the initial step, a dimer of E1 interacts with a dimer of protein E2 leading to a complex that binds the viral origin of replication with high specificity. Then, a second dimer of E1 displaces the E2 dimer in an ATP-dependent manner to form the E1 tetramer. Following this, two E1 monomers are added to each half of the site, which results in the formation of two E1 trimers on the viral ori. Subsequently, two hexamers will be created. The double hexamer acts as a bi-directional helicase machinery and unwinds the viral DNA and then recruits the host DNA polymerase to start replication. In Macaca mulatta (Rhesus macaque), this protein is Replication protein E1.